Here is a 408-residue protein sequence, read N- to C-terminus: MDKLLERFLNYVSLDTQSKAGVRQVPSTEGQWKLLHLLKEQLEEMGLINVTLSEKGTLMATLPANVPGDIPAIGFISHVDTSPDCSGKNVNPQIVENYRGGDIALGIGDEVLSPVMFPVLHQLLGQTLITTDGKTLLGADDKAGIAEIMTALAVLQQKNIPHGDIRVAFTPDEEVGKGAKHFDVDAFDARWAYTVDGGGVGELEFENFNAASVNIKIVGNNVHPGTAKGVMVNALSLAARIHAEVPADESPEMTEGYEGFYHLASMKGTVDRADMHYIIRDFDRKQFEARKRKMMEIAKKVGKGLHPDCYIELVIEDSYYNMREKVVEHPHILDIAQQAMRDCDIEPELKPIRGGTDGAQLSFMGLPCPNLFTGGYNYHGKHEFVTLEGMEKAVQVIVRIAELTAQRK.

Residue H78 coordinates Zn(2+). Residue D80 is part of the active site. Zn(2+) is bound at residue D140. E173 (proton acceptor) is an active-site residue. Zn(2+) is bound by residues E174, D196, and H379.

Belongs to the peptidase M20B family. It depends on Zn(2+) as a cofactor.

The protein resides in the cytoplasm. It catalyses the reaction Release of the N-terminal residue from a tripeptide.. Functionally, cleaves the N-terminal amino acid of tripeptides. The polypeptide is Peptidase T (Escherichia coli O9:H4 (strain HS)).